Here is a 336-residue protein sequence, read N- to C-terminus: Inositol 2-dehydrogenase (336 aa).

This sequence belongs to the Gfo/Idh/MocA family. As to quaternary structure, homotetramer.

The catalysed reaction is myo-inositol + NAD(+) = scyllo-inosose + NADH + H(+). In terms of biological role, involved in the oxidation of myo-inositol (MI) to 2-keto-myo-inositol (2KMI or 2-inosose). This chain is Inositol 2-dehydrogenase, found in Paracoccus denitrificans (strain Pd 1222).